The chain runs to 242 residues: Small ribosomal subunit protein uS2 (242 aa).

It belongs to the universal ribosomal protein uS2 family.

This Shewanella woodyi (strain ATCC 51908 / MS32) protein is Small ribosomal subunit protein uS2.